The following is a 496-amino-acid chain: Probable cytosol aminopeptidase (496 aa).

Residues lysine 257 and aspartate 262 each contribute to the Mn(2+) site. The active site involves lysine 269. Residues aspartate 281, aspartate 341, and glutamate 343 each contribute to the Mn(2+) site. Residue arginine 345 is part of the active site.

The protein belongs to the peptidase M17 family. It depends on Mn(2+) as a cofactor.

It is found in the cytoplasm. The catalysed reaction is Release of an N-terminal amino acid, Xaa-|-Yaa-, in which Xaa is preferably Leu, but may be other amino acids including Pro although not Arg or Lys, and Yaa may be Pro. Amino acid amides and methyl esters are also readily hydrolyzed, but rates on arylamides are exceedingly low.. The enzyme catalyses Release of an N-terminal amino acid, preferentially leucine, but not glutamic or aspartic acids.. Functionally, presumably involved in the processing and regular turnover of intracellular proteins. Catalyzes the removal of unsubstituted N-terminal amino acids from various peptides. This chain is Probable cytosol aminopeptidase, found in Synechococcus sp. (strain CC9311).